The following is a 595-amino-acid chain: Aspartate--tRNA ligase (595 aa).

E180 contributes to the L-aspartate binding site. The segment at 204–207 (QLFK) is aspartate. Position 226 (R226) interacts with L-aspartate. ATP contacts are provided by residues 226 to 228 (RDE) and Q235. H454 serves as a coordination point for L-aspartate. Residue E488 coordinates ATP. Position 495 (R495) interacts with L-aspartate. 540 to 543 (GLDR) serves as a coordination point for ATP.

Belongs to the class-II aminoacyl-tRNA synthetase family. Type 1 subfamily. Homodimer.

The protein resides in the cytoplasm. It catalyses the reaction tRNA(Asp) + L-aspartate + ATP = L-aspartyl-tRNA(Asp) + AMP + diphosphate. Catalyzes the attachment of L-aspartate to tRNA(Asp) in a two-step reaction: L-aspartate is first activated by ATP to form Asp-AMP and then transferred to the acceptor end of tRNA(Asp). The chain is Aspartate--tRNA ligase from Clostridium acetobutylicum (strain ATCC 824 / DSM 792 / JCM 1419 / IAM 19013 / LMG 5710 / NBRC 13948 / NRRL B-527 / VKM B-1787 / 2291 / W).